The chain runs to 296 residues: Nucleotide-binding protein SPT_1506 (296 aa).

ATP is bound at residue 13–20 (GMSGAGKT). GTP is bound at residue 63 to 66 (DMRS).

Belongs to the RapZ-like family.

Displays ATPase and GTPase activities. This chain is Nucleotide-binding protein SPT_1506, found in Streptococcus pneumoniae (strain Taiwan19F-14).